A 178-amino-acid polypeptide reads, in one-letter code: Interleukin-10 (178 aa).

Positions methionine 1 to alanine 18 are cleaved as a signal peptide. N-linked (GlcNAc...) asparagine glycosylation occurs at asparagine 29. Intrachain disulfides connect cysteine 30–cysteine 126 and cysteine 80–cysteine 132. Asparagine 134 is a glycosylation site (N-linked (GlcNAc...) asparagine).

Belongs to the IL-10 family. Homodimer. Interacts with IL10RA and IL10RB.

The protein resides in the secreted. Functionally, major immune regulatory cytokine that acts on many cells of the immune system where it has profound anti-inflammatory functions, limiting excessive tissue disruption caused by inflammation. Mechanistically, IL10 binds to its heterotetrameric receptor comprising IL10RA and IL10RB leading to JAK1 and STAT2-mediated phosphorylation of STAT3. In turn, STAT3 translocates to the nucleus where it drives expression of anti-inflammatory mediators. Targets antigen-presenting cells (APCs) such as macrophages and monocytes and inhibits their release of pro-inflammatory cytokines including granulocyte-macrophage colony-stimulating factor /GM-CSF, granulocyte colony-stimulating factor/G-CSF, IL-1 alpha, IL-1 beta, IL-6, IL-8 and TNF-alpha. Also interferes with antigen presentation by reducing the expression of MHC-class II and co-stimulatory molecules, thereby inhibiting their ability to induce T cell activation. In addition, controls the inflammatory response of macrophages by reprogramming essential metabolic pathways including mTOR signaling. This Felis catus (Cat) protein is Interleukin-10 (IL10).